A 445-amino-acid chain; its full sequence is Chromosomal replication initiator protein DnaA (445 aa).

The tract at residues 1–72 (MSGIDTIWEK…QEAFIEEIGE (72 aa)) is domain I, interacts with DnaA modulators. Positions 72–107 (EKLNIKVISSEDELMNNEKEAPVRKTQQTSQELLPN) are domain II. Residues 108–324 (QLNTDNTFDT…GALTRVSAYS (217 aa)) form a domain III, AAA+ region region. ATP contacts are provided by Gly-152, Gly-154, Lys-155, and Thr-156. The domain IV, binds dsDNA stretch occupies residues 325–445 (KLVNRELNSD…LKNIEKDITS (121 aa)).

It belongs to the DnaA family. As to quaternary structure, oligomerizes as a right-handed, spiral filament on DNA at oriC.

Its subcellular location is the cytoplasm. In terms of biological role, plays an essential role in the initiation and regulation of chromosomal replication. ATP-DnaA binds to the origin of replication (oriC) to initiate formation of the DNA replication initiation complex once per cell cycle. Binds the DnaA box (a 9 base pair repeat at the origin) and separates the double-stranded (ds)DNA. Forms a right-handed helical filament on oriC DNA; dsDNA binds to the exterior of the filament while single-stranded (ss)DNA is stabiized in the filament's interior. The ATP-DnaA-oriC complex binds and stabilizes one strand of the AT-rich DNA unwinding element (DUE), permitting loading of DNA polymerase. After initiation quickly degrades to an ADP-DnaA complex that is not apt for DNA replication. Binds acidic phospholipids. This is Chromosomal replication initiator protein DnaA from Macrococcus caseolyticus (strain JCSC5402) (Macrococcoides caseolyticum).